Reading from the N-terminus, the 148-residue chain is Arginine repressor (148 aa).

This sequence belongs to the ArgR family.

It localises to the cytoplasm. It functions in the pathway amino-acid biosynthesis; L-arginine biosynthesis [regulation]. In terms of biological role, regulates arginine biosynthesis genes. This Chlorobium luteolum (strain DSM 273 / BCRC 81028 / 2530) (Pelodictyon luteolum) protein is Arginine repressor.